The sequence spans 619 residues: ATP-dependent zinc metalloprotease FtsH (619 aa).

Topologically, residues 1–5 (MKYFK) are cytoplasmic. Residues 6–26 (GISFYIIIFILILVIITFFTA) form a helical membrane-spanning segment. At 27 to 110 (TDNPPKMSYS…VTQPPQPPWW (84 aa)) the chain is on the extracellular side. Residues 111-131 (VSMLPTVGLVIILILIWFFFI) form a helical membrane-spanning segment. The Cytoplasmic portion of the chain corresponds to 132–619 (QQSQGGGGGN…GSSQTPQLEG (488 aa)). ATP is bound at residue 204 to 211 (GPPGTGKT). H426 is a binding site for Zn(2+). Residue E427 is part of the active site. The Zn(2+) site is built by H430 and D502.

The protein in the central section; belongs to the AAA ATPase family. In the C-terminal section; belongs to the peptidase M41 family. As to quaternary structure, homohexamer. The cofactor is Zn(2+).

It localises to the cell membrane. Acts as a processive, ATP-dependent zinc metallopeptidase for both cytoplasmic and membrane proteins. Plays a role in the quality control of integral membrane proteins. The protein is ATP-dependent zinc metalloprotease FtsH of Ruminiclostridium cellulolyticum (strain ATCC 35319 / DSM 5812 / JCM 6584 / H10) (Clostridium cellulolyticum).